Here is a 386-residue protein sequence, read N- to C-terminus: Succinate--CoA ligase [ADP-forming] subunit beta (386 aa).

The ATP-grasp domain maps to 9–244; that stretch reads KEILRKYGVP…HDEEDPLETR (236 aa). ATP is bound by residues lysine 46, 53 to 55, glutamate 99, cysteine 102, and glutamate 107; that span reads GRG. Residues asparagine 199 and aspartate 213 each coordinate Mg(2+). Residues asparagine 264 and 321–323 contribute to the substrate site; that span reads GIM.

It belongs to the succinate/malate CoA ligase beta subunit family. In terms of assembly, heterotetramer of two alpha and two beta subunits. It depends on Mg(2+) as a cofactor.

It carries out the reaction succinate + ATP + CoA = succinyl-CoA + ADP + phosphate. The enzyme catalyses GTP + succinate + CoA = succinyl-CoA + GDP + phosphate. It participates in carbohydrate metabolism; tricarboxylic acid cycle; succinate from succinyl-CoA (ligase route): step 1/1. In terms of biological role, succinyl-CoA synthetase functions in the citric acid cycle (TCA), coupling the hydrolysis of succinyl-CoA to the synthesis of either ATP or GTP and thus represents the only step of substrate-level phosphorylation in the TCA. The beta subunit provides nucleotide specificity of the enzyme and binds the substrate succinate, while the binding sites for coenzyme A and phosphate are found in the alpha subunit. This Rickettsia rickettsii (strain Iowa) protein is Succinate--CoA ligase [ADP-forming] subunit beta.